The following is a 699-amino-acid chain: Elongation factor G (699 aa).

The region spanning 8–288 is the tr-type G domain; sequence EDYRNFGIMA…AVVDYLPSPM (281 aa). Residues 17–24, 86–90, and 140–143 each bind GTP; these read AHIDAGKT, DTPGH, and NKMD.

It belongs to the TRAFAC class translation factor GTPase superfamily. Classic translation factor GTPase family. EF-G/EF-2 subfamily.

The protein resides in the cytoplasm. Functionally, catalyzes the GTP-dependent ribosomal translocation step during translation elongation. During this step, the ribosome changes from the pre-translocational (PRE) to the post-translocational (POST) state as the newly formed A-site-bound peptidyl-tRNA and P-site-bound deacylated tRNA move to the P and E sites, respectively. Catalyzes the coordinated movement of the two tRNA molecules, the mRNA and conformational changes in the ribosome. The chain is Elongation factor G from Rhizobium johnstonii (strain DSM 114642 / LMG 32736 / 3841) (Rhizobium leguminosarum bv. viciae).